We begin with the raw amino-acid sequence, 199 residues long: MKKHKNQMYLIKIFIALAVITGIIYLYLFYSSFEPSQIYINTKVSDKNNSQAIKFALKDQKGKVFNDKDLKGHLSLIYFGVTYSLDDENALKKIEDIIKILQKENIVVQTVFITLDPINDTSEVLKKYLENIDNNFIGLTGTIDDITQVANEFKVFYEPKTFDTETGKYELKHSNFVYLISSDGKFLKHYCLGLPKNDR.

This sequence belongs to the SCO1/2 family.

The polypeptide is SCO2-like protein RBE_0029 (Rickettsia bellii (strain RML369-C)).